A 628-amino-acid polypeptide reads, in one-letter code: MAGERPPLRGPGPGETPVEGPGGAGGGPGRGRPSSYRALRSAVSSLARVDDFDCAEKIGAGFFSEVYKVRHRQSGQVMVLKMNKLPSNRSNTLREVQLMNRLRHPNILRFMGVCVHQGQLHALTEYMNGGTLEQLLSSPEPLSWPVRLHLALDIAQGLRYLHAKGVFHRDLTSKNCLVRREDGGFTAVVGDFGLAEKIPVYREGARKEPLAVVGSPYWMAPEVLRGELYDEKADVFAFGIVLCELIARVPADPDYLPRTEDFGLDVPAFRTLVGNDCPLPFLLLAIHCCSMEPSARAPFTEITQHLEQILEQLPEPTPLAKMPLAKAPLTYNQGSVPRGGPSATLPRSDPRLSRSRSDLFLPPSPESPPSWGDNLTRVNPFSLREDLRGGKIKLLDTPCKPATPLPLVPPSPLTSTQLPLVASPESLVQPETPVRRCRSLPSSPELPRRMETALPGPGPSPVGPSTEERMDCEGSSPEPEPPGPAPQLPLAVATDNFISTCSSASQPWSARPGPSLNNNPPAVVVNSPQGWAREPWNRAQHSLPRAAALERTEPSPPPSAPREQEEGLPCPGCCLSPFSFGFLSMCPRPTPAVARYRNLNCEAGSLLCHRGHHAKPPTPSLQLPGARS.

Positions 1 to 35 (MAGERPPLRGPGPGETPVEGPGGAGGGPGRGRPSS) are disordered. Residues 20-30 (GPGGAGGGPGR) show a composition bias toward gly residues. The region spanning 52–310 (FDCAEKIGAG…EITQHLEQIL (259 aa)) is the Protein kinase domain. ATP is bound by residues 58–66 (IGAGFFSEV) and K81. D170 serves as the catalytic Proton acceptor. S215 is subject to Phosphoserine; by autocatalysis. Disordered stretches follow at residues 330–376 (TYNQ…DNLT), 424–490 (PESL…QLPL), and 538–568 (RAQH…EEGL). Omega-N-methylarginine is present on R338. Residues 348–357 (SDPRLSRSRS) are compositionally biased toward basic and acidic residues. Residues 421–526 (VASPESLVQP…NNNPPAVVVN (106 aa)) are required for interaction with YWHAB. At S439 the chain carries Phosphoserine. The segment covering 478–487 (EPEPPGPAPQ) has biased composition (pro residues). Positions 529-626 (QGWAREPWNR…PTPSLQLPGA (98 aa)) are required for interaction with PARVA. The interval 529 to 628 (QGWAREPWNR…PSLQLPGARS (100 aa)) is required for interaction with SPRED1 and SPRY2. Required for TESK1-mediated dephosphorylation of SPRY2 and SPRY2 inhibition of ERK phosphorylation.

It belongs to the protein kinase superfamily. TKL Ser/Thr protein kinase family. As to quaternary structure, interacts (via both C- and N-termini) with SPRY4 (via C-terminus); the interaction inhibits TESK1 kinase activity. Interacts with TAOK1; the interaction inhibits TAOK1 kinase activity. Interacts (via C-terminus) with SPRED1 (via C-terminus); the interaction inhibits TESK1 kinase activity. Interacts (via C-terminus) with PARVA/PARVIN (via C-terminus); the interaction inhibits TESK1 kinase activity. Interacts with YWHAB/14-3-3 beta; the interaction is dependent on the phosphorylation of TESK1 Ser-439 and inhibits TESK1 kinase activity. Interacts with SPRY1, SPRY3 and SPRED2. Interacts (via C-terminus) with SPRY2 (via C-terminus); the interaction disrupts SPRY2 interaction with PPP2CA/PP2A-C, possibly by vesicular sequestration of SPRY2. Therefore dephosphorylation of SPRY2 by the serine/threonine-protein phosphatase 2A (PP2A) holoenzyme is lost, inhibiting its interaction with GRB2. The cofactor is Mg(2+). Mn(2+) is required as a cofactor. Post-translationally, autophosphorylated on serine and tyrosine residues. Weakly expressed in sciatic nerves (at protein level). Highly expressed in testicular germ cells. Expressed at low levels in brain, lung, heart, liver and kidney.

Its subcellular location is the cytoplasm. It localises to the perinuclear region. The protein localises to the cytoskeleton. It is found in the microtubule organizing center. The protein resides in the centrosome. Its subcellular location is the cell projection. It localises to the lamellipodium. It carries out the reaction L-seryl-[protein] + ATP = O-phospho-L-seryl-[protein] + ADP + H(+). The catalysed reaction is L-threonyl-[protein] + ATP = O-phospho-L-threonyl-[protein] + ADP + H(+). It catalyses the reaction L-tyrosyl-[protein] + ATP = O-phospho-L-tyrosyl-[protein] + ADP + H(+). Activated by autophosphorylation on Ser-215. Kinase activity is inhibited by SPRED1. Dual specificity protein kinase activity catalyzing autophosphorylation and phosphorylation of exogenous substrates on both serine/threonine and tyrosine residues. Regulates the cellular cytoskeleton by enhancing actin stress fiber formation via phosphorylation of cofilin and by preventing microtubule breakdown via inhibition of TAOK1/MARKK kinase activity. Inhibits podocyte motility via regulation of actin cytoskeletal dynamics and phosphorylation of CFL1. Positively regulates integrin-mediated cell spreading, via phosphorylation of cofilin. Suppresses ciliogenesis via multiple pathways; phosphorylation of CFL1, suppression of ciliary vesicle directional trafficking to the ciliary base, and by facilitating YAP1 nuclear localization where it acts as a transcriptional corepressor of the TEAD4 target genes AURKA and PLK1. Probably plays a central role at and after the meiotic phase of spermatogenesis. This is Dual specificity testis-specific protein kinase 1 (Tesk1) from Rattus norvegicus (Rat).